The following is a 287-amino-acid chain: Pantothenate synthetase (287 aa).

ATP is bound at residue 30–37 (MGALHSGH). The active-site Proton donor is the histidine 37. (R)-pantoate is bound at residue glutamine 61. Glutamine 61 provides a ligand contact to beta-alanine. 152 to 155 (GQKD) contributes to the ATP binding site. Glutamine 158 is a binding site for (R)-pantoate. Residues isoleucine 181 and 189 to 192 (ESSR) each bind ATP.

The protein belongs to the pantothenate synthetase family. In terms of assembly, homodimer.

It localises to the cytoplasm. The enzyme catalyses (R)-pantoate + beta-alanine + ATP = (R)-pantothenate + AMP + diphosphate + H(+). It functions in the pathway cofactor biosynthesis; (R)-pantothenate biosynthesis; (R)-pantothenate from (R)-pantoate and beta-alanine: step 1/1. Catalyzes the condensation of pantoate with beta-alanine in an ATP-dependent reaction via a pantoyl-adenylate intermediate. The chain is Pantothenate synthetase from Corynebacterium efficiens (strain DSM 44549 / YS-314 / AJ 12310 / JCM 11189 / NBRC 100395).